The chain runs to 917 residues: MSQDRIAGIDVATNSTDISNIINEMIICIKGKQMPEVHEKAMDHLSKMIAANSRVIRDSNMLTERECVQKIMKLLSARNKKEEGKTVSDHFNELYRKLTLTKCDPHMRHSLMTHLLTMTDNSDAEKAVASEDPRTQCDNLTQILVSRLNSISSSIASLNEMGVVNGNGVGAAAVTGAAAVTGAAAVTGAAAVTGAAASHSYDATQSSIGLRKQSLPNYLDATKMLPESRHDIVMSAIYSFTGVQGKYLKKDVVTGRFKLDQQNIKFLTTGQAGMLLRLSELGYYHDRVVKFSDVSTGFNAIGSMGQALISKLKEELANFHGQVAMLHDEMQRFRQASVNGIANKGKKDSGPDAGDEMTLFKLLAWYIKPLHRMQWLTKIADACQVKKGGDLASTVYDFLDNGNDMVNKLVEDLLTAICGPLVRMISKWILEGGISDMHREFFVKSIKDVGVDRLWHDKFRLRLPMLPKFVPMDMANKILMTGKSINFLREICEEQGMMKERDELMKVMESSASQIFSYTPDTSWHAAVETCYQQTSKHVLDIMVGPHKLLDHLHGMRRYLLLGQGDFISILIENMKNELERPGLDIYANDLTSMLDSALRCTNAQYDDPDILNHLDVIVQRPFNGDIGWNIISLQYIVHGPLAAMLESTMPTYKVLFKPLWRMKHMEFVLSMKIWKEQMGNAKALRTMKSEIGKASHRLNLFTSEIMHFIHQMQYYVLFEVIECNWVELQKKMQKATTLDEILEAHEKFLQTILVGCFVSNKASVEHSLEVVYENIIELEKWQSSFYKDCFKELNARKELSKIVEKSEKKGVYGLTNKMILQRDQEAKIFAEKMDIACRGLEVIATDYEKAVSTFLMSLNSSDDPNLQLFGTRLDFNEYYKKRDTNLSKPLTFEHMRMSNVFAVNSRFVICTPSTQE.

It belongs to the TUBGCP family. As to quaternary structure, gamma-tubulin small complex (Gamma TuSC) is a heterotetrameric complex which contains two molecules of gamma-tubulin, and one molecule each of Dgrip84 and Dgrip91. The gamma-tubulin in this complex binds preferentially to GDP over GTP.

It is found in the cytoplasm. The protein resides in the cytoskeleton. It localises to the microtubule organizing center. The protein localises to the centrosome. Its subcellular location is the perinuclear region. This is Gamma-tubulin complex component 3 from Drosophila melanogaster (Fruit fly).